Here is a 509-residue protein sequence, read N- to C-terminus: GRAS family protein RAD1 (509 aa).

The region spanning 125–508 (EDGCADGMRL…KPIVAASCWK (384 aa)) is the GRAS domain. The interval 132 to 198 (MRLVQLLIAC…IQPIGSGAGV (67 aa)) is leucine repeat I (LRI). The segment at 217–286 (YRLVYETCPH…SGHGRVRRLR (70 aa)) is VHIID. The VHIID motif lies at 248–252 (VHVVD). The interval 299-331 (AIGDELSDYANNLGINLEFSVVQKNLENLQPED) is leucine repeat II (LRII). Residues 340–431 (LVVNSILQLH…QFYFAEEIKN (92 aa)) are PFYRE. Positions 434-508 (SCEGPLRMER…KPIVAASCWK (75 aa)) are SAW.

The protein belongs to the GRAS family. Interacts with RAM1 and NSP2. As to expression, expressed in roots under low phosphate (Pi) conditions.

It localises to the nucleus. In terms of biological role, transcription factor acting as a regulator of arbuscular mycorrhiza (AM)-related genes (e.g. PT4, STR and RAM2). Required for the morphogenesis of arbuscules upon symbiosis with AM fungi (e.g. Rhizophagus irregularis). Also involved in restricting mycorrhizal colonization of the root meristem. The chain is GRAS family protein RAD1 from Lotus japonicus (Lotus corniculatus var. japonicus).